We begin with the raw amino-acid sequence, 342 residues long: tRNA N6-adenosine threonylcarbamoyltransferase (342 aa).

The Fe cation site is built by His-115 and His-119. Substrate contacts are provided by residues 137-141 (IVSGG), Asp-170, Gly-183, Asp-187, and Asn-276. Residue Asp-304 coordinates Fe cation.

The protein belongs to the KAE1 / TsaD family. Requires Fe(2+) as cofactor.

The protein localises to the cytoplasm. It carries out the reaction L-threonylcarbamoyladenylate + adenosine(37) in tRNA = N(6)-L-threonylcarbamoyladenosine(37) in tRNA + AMP + H(+). Functionally, required for the formation of a threonylcarbamoyl group on adenosine at position 37 (t(6)A37) in tRNAs that read codons beginning with adenine. Is involved in the transfer of the threonylcarbamoyl moiety of threonylcarbamoyl-AMP (TC-AMP) to the N6 group of A37, together with TsaE and TsaB. TsaD likely plays a direct catalytic role in this reaction. The sequence is that of tRNA N6-adenosine threonylcarbamoyltransferase from Staphylococcus saprophyticus subsp. saprophyticus (strain ATCC 15305 / DSM 20229 / NCIMB 8711 / NCTC 7292 / S-41).